The following is a 644-amino-acid chain: Uromodulin (644 aa).

Residues 1–26 form the signal peptide; the sequence is MGQLLSLTWLLLVMVVTPWFTVAGAN. Positions 30 to 66 constitute an EGF-like 1 domain; sequence EARRCSECHDNATCVLDGVVTTCSCQAGFTGDGLVCE. Disulfide bonds link C34-C43, C37-C52, C54-C65, C71-C84, C79-C93, C95-C107, C113-C127, C121-C136, C138-C149, C151-C162, C156-C173, C177-C270, C198-C285, C220-C258, C226-C290, C251-C259, C300-C309, C303-C318, C320-C350, C338-C428, and C369-C392. A glycan (N-linked (GlcNAc...) asparagine) is linked at N40. Residues 67-108 enclose the EGF-like 2; calcium-binding domain; it reads DIDECATPWTHNCSNSICMNTLGSYECSCQDGFRLTPGLGCI. A glycan (N-linked (GlcNAc...) asparagine) is linked at N78. The 42-residue stretch at 109-150 folds into the EGF-like 3; calcium-binding domain; the sequence is DVNECTEQGLSNCHSLATCVNTEGSYSCVCPKGYRGDGWYCE. A beta hairpin region spans residues 151-174; that stretch reads CSPGFCEPGLDCLPQGPSGKLVCQ. The interval 175 to 294 is D10C; that stretch reads DPCNVYETLT…CNLAYCTDPS (120 aa). N-linked (GlcNAc...) asparagine glycosylation occurs at N235. N-linked (GlcNAc...) asparagine glycosylation is present at N278. Residues 295-326 enclose the EGF-like 4 domain; the sequence is SVEGTCEECGVDEDCVSDNGRWRCQCKQDFNV. N325 carries N-linked (GlcNAc...) asparagine glycosylation. Residues 337 to 432 are ZP-N; it reads ECEANEIKIS…RINFECSYPL (96 aa). The 256-residue stretch at 337-592 folds into the ZP domain; sequence ECEANEIKIS…PTCSGTRYRS (256 aa). 2 N-linked (GlcNAc...) asparagine glycosylation sites follow: N399 and N450. The flexible ZP-N/ZP-C linker; important for secretion and polymerization into filaments stretch occupies residues 433-456; it reads DMKVSLKTSLQPMVSALNISLGGT. Residues 457–467 are internal hydrophobic patch (IHP); that stretch reads GKFTVQMALFQ. The tract at residues 457-592 is ZP-C; sequence GKFTVQMALF…PTCSGTRYRS (136 aa). 3 cysteine pairs are disulfide-bonded: C509/C569, C530/C585, and C574/C581. N-linked (GlcNAc...) asparagine glycosylation is present at N516. The segment at 589–592 is essential for cleavage by HPN; that stretch reads RYRS. The tract at residues 601-609 is external hydrophobic patch (EHP); regulates polymerization into filaments; the sequence is VLNLGPITR. S615 is lipidated: GPI-anchor amidated serine. Residues 616–644 constitute a propeptide, removed in mature form; the sequence is VSKAASSNLGFLSIWLLLFLSATLTLMVH.

In terms of assembly, homodimer that then polymerizes into long filaments. The filaments can additionally assemble laterally to form a sheet. The filaments consist of a zigzag-shaped backbone with laterally protruding arms which interact with bacterial adhesin fimH. Two fimH molecules can bind to a single UMOD monomer. Post-translationally, N-glycosylated. Proteolytically cleaved at a conserved C-terminal proteolytic cleavage site to generate the secreted form found in urine. This cleavage is catalyzed by HPN. In terms of tissue distribution, expression restricted to the thick ascending limb of the loop of Henle (TALH).

It localises to the apical cell membrane. The protein resides in the basolateral cell membrane. Its subcellular location is the cell projection. The protein localises to the cilium membrane. It is found in the secreted. Its function is as follows. Functions in biogenesis and organization of the apical membrane of epithelial cells of the thick ascending limb of Henle's loop (TALH), where it promotes formation of complex filamentous gel-like structure that may play a role in the water barrier permeability. May serve as a receptor for binding and endocytosis of cytokines (IL-1, IL-2) and TNF. Facilitates neutrophil migration across renal epithelia. In terms of biological role, in the urine, may contribute to colloid osmotic pressure, retards passage of positively charged electrolytes, and inhibits formation of liquid containing supersaturated salts and subsequent formation of salt crystals. Protects against urinary tract infections by binding to type 1 fimbriated E.coli. Binds to bacterial adhesin fimH which mediates the stable formation of bacterial aggregates, prevents the binding of E.coli to uroplakins UPK1A and UPK1B which act as urothelial receptors for type I fimbriae, and allows for pathogen clearance through micturation. Also promotes aggregation of other bacteria including K.pneumoniae, P.aeruginosa and S.mitis and so may also protect against other uropathogens. The protein is Uromodulin (Umod) of Rattus norvegicus (Rat).